A 279-amino-acid chain; its full sequence is Toxin TxP-I (279 aa).

The signal sequence occupies residues 1–14 (MNLFFLFIIPTILA). A propeptide spanning residues 15-27 (VKPFRSFNNISLI) is cleaved from the precursor.

Post-translationally, contains several disulfide bonds. In terms of tissue distribution, posterior glands which appear to be connected with the stylet through a series of ducts.

The protein resides in the secreted. Its function is as follows. Part of a complex mixture of neurotoxins which P.tritici utilizes to capture prey. It has contracting-paralyzing activity in insects. This Pyemotes tritici (Straw itch mite) protein is Toxin TxP-I.